The primary structure comprises 533 residues: Lymphocyte cytosolic protein 2 (533 aa).

The SAM domain occupies 15-81 (WDPDSLADYF…INKNEERRSI (67 aa)). Tyrosine 23 carries the post-translational modification Phosphotyrosine. Positions 78-417 (RRSIFTRKPQ…PPSPAEEENS (340 aa)) are disordered. Positions 108-155 (FEEDDYESPNDDQDGEDDGDYESPNEEEEAPVEDDADYEPPPSNDEEA) are enriched in acidic residues. Pro residues predominate over residues 184–213 (QQPPVPPQRPMAALPPPPAGRNHSPLPPPQ). Serine 207 carries the phosphoserine modification. Composition is skewed to polar residues over residues 337–350 (MSSNTFPSRSTKPS) and 365–376 (SESNSSFPQSAS). Serine 376 and serine 410 each carry phosphoserine. Positions 400 to 411 (LPLPNKPRPPSP) are enriched in pro residues. The SH2 domain occupies 422-530 (WYVSYITRPE…RYQCTLTHAA (109 aa)).

Interacts with SLA. Interacts with CBLB. Interacts with GRB2. Interacts with SHB. Interacts with PRAM1. Interacts (via SH2 domain) with CD6 (via tyrosine phosphorylated C-terminus). Interacts with FYB1 and the phosphorylated form of FYB2. Interacts with 14-3-3 adapter/YWHAZ; this phosphorylation leads to YWHAZ proteolytic degradation. Interacts with VAV1; this interaction plays a role in TCR-mediated cytokine production. Interacts with AGER; this interaction plays an important role in AGER-mediated pro-inflammatory responses and cytokine release. In terms of processing, phosphorylated after T-cell receptor activation by ZAP70, ITK and TXK, which leads to the up-regulation of Th1 preferred cytokine IL-2. SYK-dependent phosphorylation is required for recruitment of PI3K signaling components. In terms of tissue distribution, highly expressed in spleen, thymus and peripheral blood leukocytes. Highly expressed also in T-cell and monocytic cell lines, expressed at lower level in B-cell lines. Not detected in fibroblast or neuroblastoma cell lines.

Its subcellular location is the cytoplasm. Its function is as follows. Adapter protein primarily involved in signaling pathways within T-cells, as well as other immune cells such as platelets, mast cells, and natural killer (NK) cells. Plays a crucial role for transducing signal from the T-cell receptor (TCR) after antigen recognition leading to T-cell activation. Mechanistically, once phosphorylated by the kinase ZAP70, mediates interactions with the guanine-nucleotide exchange factor VAV1, the adapter protein NCK and the kinase ITK. In turn, stimulates the activation of PKC-theta/PRKCQ and NF-kappa-B transcriptional activity in response to CD3 and CD28 costimulation. Also plays an essential role in AGER-induced signaling pathways including p38 MAPK and ERK1/2 activation leading to cytokine release and pro-inflammatory responses. This is Lymphocyte cytosolic protein 2 (LCP2) from Homo sapiens (Human).